The sequence spans 197 residues: dTTP/UTP pyrophosphatase (197 aa).

Residue aspartate 70 is the Proton acceptor of the active site.

This sequence belongs to the Maf family. YhdE subfamily. The cofactor is a divalent metal cation.

The protein localises to the cytoplasm. It catalyses the reaction dTTP + H2O = dTMP + diphosphate + H(+). The enzyme catalyses UTP + H2O = UMP + diphosphate + H(+). Nucleoside triphosphate pyrophosphatase that hydrolyzes dTTP and UTP. May have a dual role in cell division arrest and in preventing the incorporation of modified nucleotides into cellular nucleic acids. The polypeptide is dTTP/UTP pyrophosphatase (yceF2) (Escherichia coli O6:K15:H31 (strain 536 / UPEC)).